The following is a 513-amino-acid chain: Aromatic amino acid aminotransferase 2 (513 aa).

Residues Ser-90 and Ser-92 each carry the phosphoserine modification. Residues Tyr-102, Ser-143–Asn-144, Asn-232, Tyr-263, and Thr-314–Ser-316 contribute to the pyridoxal 5'-phosphate site. Asn-232 is a substrate binding site. The residue at position 317 (Lys-317) is an N6-(pyridoxal phosphate)lysine. Residue Arg-324 coordinates pyridoxal 5'-phosphate. Position 481 (Arg-481) interacts with substrate.

The protein belongs to the class-I pyridoxal-phosphate-dependent aminotransferase family. Pyridoxal 5'-phosphate is required as a cofactor.

Its subcellular location is the cytoplasm. It catalyses the reaction an aromatic L-alpha-amino acid + 2-oxoglutarate = an aromatic oxo-acid + L-glutamate. The enzyme catalyses an aromatic L-alpha-amino acid + 4-methylsulfanyl-2-oxobutanoate = an aromatic oxo-acid + L-methionine. The catalysed reaction is L-kynurenine + 2-oxoglutarate = kynurenate + L-glutamate + H2O. Its pathway is amino-acid biosynthesis; L-methionine biosynthesis via salvage pathway; L-methionine from S-methyl-5-thio-alpha-D-ribose 1-phosphate: step 6/6. The protein operates within amino-acid degradation; L-kynurenine degradation; kynurenate from L-kynurenine: step 1/2. General aromatic amino acid transaminase involved in several otherwise unrelated metabolic pathways. Mainly involved in tryptophan degradation. Active with phenylalanine, tyrosine and tryptophan as amino donors and with phenylpyruvate, hydroxyphenylpyruvate and pyruvate as amino acceptors. Does not accept glutamate or 2-oxoglutarate as substrates. Also active with methionine, leucine, glutamine and kynurenine. Catalyzes the formation of methionine from 2-keto-4-methylthiobutyrate (KMTB) in the methionine salvage pathway primarily using aromatic amino acids (tyrosine, phenylalanine and tryptophan) as the amino donors. Catalyzes the irreversible transamination of the L-tryptophan metabolite L-kynurenine to form kynurenic acid (KA) with pyruvate as amino acceptor. The polypeptide is Aromatic amino acid aminotransferase 2 (Saccharomyces cerevisiae (strain ATCC 204508 / S288c) (Baker's yeast)).